Consider the following 329-residue polypeptide: Prostaglandin reductase 1 (329 aa).

The residue at position 18 (Thr-18) is a Phosphothreonine. Ser-20 is subject to Phosphoserine. NADP(+) contacts are provided by residues 152-155 (GAVG), Lys-178, Tyr-193, Asn-217, 239-245 (CGAISTY), 270-272 (FIV), and Asn-321. Lys-178 carries the N6-(2-hydroxyisobutyryl)lysine; alternate modification. Position 178 is an N6-acetyllysine; alternate (Lys-178).

The protein belongs to the NADP-dependent oxidoreductase L4BD family. In terms of assembly, monomer or homodimer. In terms of tissue distribution, ubiquitously distributed in various tissues and leukocytes, the kidney and liver had the highest enzyme activities.

It localises to the cytoplasm. It carries out the reaction 13,14-dihydro-15-oxo-prostaglandin E1 + NADP(+) = 15-oxoprostaglandin E1 + NADPH + H(+). The enzyme catalyses 13,14-dihydro-15-oxo-prostaglandin E2 + NADP(+) = 15-oxoprostaglandin E2 + NADPH + H(+). It catalyses the reaction 13,14-dihydro-15-oxo-prostaglandin E2 + NAD(+) = 15-oxoprostaglandin E2 + NADH + H(+). The catalysed reaction is 13,14-dihydro-15-oxo-prostaglandin F1alpha + NADP(+) = 15-oxoprostaglandin F1alpha + NADPH + H(+). It carries out the reaction 13,14-dihydro-15-oxo-PGF2alpha + NADP(+) = 15-oxoprostaglandin F2alpha + NADPH + H(+). The enzyme catalyses leukotriene B4 + NADP(+) = 12-oxo-leukotriene B4 + NADPH + H(+). It catalyses the reaction 20-hydroxy-leukotriene B4 + NADP(+) = 12-oxo-20-hydroxy-leukotriene B4 + NADPH + H(+). The catalysed reaction is 6-trans-leukotriene B4 + NADP(+) = 12-oxo-(5S)-hydroxy-(6E,8E,10E,14Z)-eicosatetraenoate + NADPH + H(+). It carries out the reaction (5S,12S)-dihydroxy-(6E,10E,12E,14Z)-eicosatetraenoate + NADP(+) = 12-oxo-(5S)-hydroxy-(6E,8E,10E,14Z)-eicosatetraenoate + NADPH + H(+). The enzyme catalyses 15-oxo-(5S,6R)-dihydroxy-(7E,9E,11Z,13E)-eicosatetraenoate + NADH + H(+) = 15-oxo-(5S,6R)-dihydroxy-(7E,9E,11Z)-eicosatrienoate + NAD(+). It catalyses the reaction an n-alkanal + NADP(+) = an alk-2-enal + NADPH + H(+). The catalysed reaction is hexanal + NADP(+) = (E)-hex-2-enal + NADPH + H(+). It carries out the reaction octanal + NADP(+) = (2E)-octenal + NADPH + H(+). The enzyme catalyses decanal + NADP(+) = (2E)-decenal + NADPH + H(+). It catalyses the reaction dodecanal + NADP(+) = (2E)-dodecenal + NADPH + H(+). The catalysed reaction is 4-hydroxynonanal + NADP(+) = (E)-4-hydroxynon-2-enal + NADPH + H(+). It carries out the reaction pentan-2-one + NADP(+) = (E)-pent-3-en-2-one + NADPH + H(+). The enzyme catalyses nonan-2-one + NADP(+) = (3E)-nonen-2-one + NADPH + H(+). Down-regulated by nonsteroidal anti-inflammatory drugs diclofenac, indomethacin and niflumic acid. NAD(P)H-dependent oxidoreductase involved in metabolic inactivation of pro- and anti-inflammatory eicosanoids: prostaglandins (PG), leukotrienes (LT) and lipoxins (LX). Preferentially uses NADPH over NADH as cofactor. Catalyzes with high efficiency the reduction of the 13,14 double bond of 15-oxoPGs, including 15-oxo-PGE1, 15-oxo-PGE2, 15-oxo-PGF1-alpha and 15-oxo-PGF2-alpha. Catalyzes with lower efficiency the oxidation of the hydroxyl group at C12 of LTB4 and its derivatives, converting them into biologically less active 12-oxo-LTB4 metabolites. Reduces 15-oxo-LXA4 to 13,14 dihydro-15-oxo-LXA4 and may promote neutrophil recruitment at the inflammatory site. Plays a role in metabolic detoxification of alkenals and ketones. Reduces alpha,beta-unsaturated alkenals and ketones, particularly those with medium-chain length, showing highest affinity toward (2E)-decenal and (3E)-3-nonen-2-one. May inactivate 4-hydroxy-2-nonenal, a cytotoxic lipid constituent of oxidized low-density lipoprotein particles. In Sus scrofa (Pig), this protein is Prostaglandin reductase 1 (PTGR1).